An 85-amino-acid chain; its full sequence is Small ribosomal subunit protein uS17 (85 aa).

This sequence belongs to the universal ribosomal protein uS17 family. Part of the 30S ribosomal subunit.

Its function is as follows. One of the primary rRNA binding proteins, it binds specifically to the 5'-end of 16S ribosomal RNA. In Mycoplasma genitalium (strain ATCC 33530 / DSM 19775 / NCTC 10195 / G37) (Mycoplasmoides genitalium), this protein is Small ribosomal subunit protein uS17.